The primary structure comprises 184 residues: Photosystem I assembly protein Ycf4 (184 aa).

A run of 2 helical transmembrane segments spans residues 19 to 39 (ISNLCWAFILFLGSLGFFLVG) and 57 to 77 (IIFFPQGIVMSFYGIAGLFIS).

The protein belongs to the Ycf4 family.

The protein localises to the plastid thylakoid membrane. In terms of biological role, seems to be required for the assembly of the photosystem I complex. This chain is Photosystem I assembly protein Ycf4, found in Cuscuta exaltata (Tall dodder).